Reading from the N-terminus, the 203-residue chain is Urease accessory protein UreG (203 aa).

A GTP-binding site is contributed by 14 to 21; sequence GPVGSGKT.

It belongs to the SIMIBI class G3E GTPase family. UreG subfamily. Homodimer. UreD, UreF and UreG form a complex that acts as a GTP-hydrolysis-dependent molecular chaperone, activating the urease apoprotein by helping to assemble the nickel containing metallocenter of UreC. The UreE protein probably delivers the nickel.

The protein localises to the cytoplasm. Facilitates the functional incorporation of the urease nickel metallocenter. This process requires GTP hydrolysis, probably effectuated by UreG. This is Urease accessory protein UreG from Sinorhizobium fredii (strain NBRC 101917 / NGR234).